Reading from the N-terminus, the 455-residue chain is Tubby-like F-box protein 1 (455 aa).

Residues 54–112 (ETPWANLPPELLRDVIKRLEESESVWPARRHVVACASVCRSWRDMCKEIVQSPELSGKI) enclose the F-box domain. The segment at 386-414 (QPQPQPQPQPQPQPLTQPQPSGQTDGPDK) is disordered. The span at 388 to 402 (QPQPQPQPQPQPLTQ) shows a compositional bias: pro residues.

The protein belongs to the TUB family. In terms of tissue distribution, ubiquitous.

In Arabidopsis thaliana (Mouse-ear cress), this protein is Tubby-like F-box protein 1.